Reading from the N-terminus, the 630-residue chain is 1-deoxy-D-xylulose-5-phosphate synthase (630 aa).

Thiamine diphosphate is bound by residues His74 and 115–117; that span reads GHA. Asp146 is a binding site for Mg(2+). Thiamine diphosphate contacts are provided by residues 147–148, Asn175, Phe284, and Glu364; that span reads AA. Residue Asn175 participates in Mg(2+) binding.

The protein belongs to the transketolase family. DXPS subfamily. Homodimer. Mg(2+) is required as a cofactor. The cofactor is thiamine diphosphate.

It carries out the reaction D-glyceraldehyde 3-phosphate + pyruvate + H(+) = 1-deoxy-D-xylulose 5-phosphate + CO2. The protein operates within metabolic intermediate biosynthesis; 1-deoxy-D-xylulose 5-phosphate biosynthesis; 1-deoxy-D-xylulose 5-phosphate from D-glyceraldehyde 3-phosphate and pyruvate: step 1/1. In terms of biological role, catalyzes the acyloin condensation reaction between C atoms 2 and 3 of pyruvate and glyceraldehyde 3-phosphate to yield 1-deoxy-D-xylulose-5-phosphate (DXP). The protein is 1-deoxy-D-xylulose-5-phosphate synthase of Methylacidiphilum infernorum (isolate V4) (Methylokorus infernorum (strain V4)).